Reading from the N-terminus, the 463-residue chain is MNPSHGGDDKQRPAMYPQVDQSIPDNPFASTNPYVASSPYLYPSLSSHNLGPNLFPDHGDASNDQSPSAPPQATEEVLIRVPGAILNLIDKSYSVELACGDFTIVRIIQGQNIVAVLANVGNEIQWPLTKNEVAAKVDGSHYFFSIHPPKEKGQGSGSDSDDEQGQKSKSKSDDEILNYGLTIASKGQENVLLVLDQVLRDYSCFTEQRMSEKAKETGEEVLGNSVVADTSPEELKGERKDVVEGQCAAYWTTLAPNVEDYTHSTAKMIASGSGKLIRGILWCGDVTVERLKKGNEVMKNRLSRAEKEKDVSPETLRRIKRVKRVTQMTEKVATGVLSGVVKVSGFITGSMANSKAGKKLFGLLPGEIVLASLDGFSKICDAVEVAGKNVMSTSSTVTTELVNHRYGTKAAEATNEGLDAAGHAFGTAWVAFKIRKAFNPKNVIKPSSLAKSVSELKAKKGSK.

The segment covering 1 to 12 (MNPSHGGDDKQR) has biased composition (basic and acidic residues). Disordered regions lie at residues 1–31 (MNPS…FAST), 52–74 (PNLF…PQAT), and 146–172 (IHPP…KSKS). Residues 19-31 (VDQSIPDNPFAST) are compositionally biased toward polar residues. The Senescence domain maps to 269 to 437 (IASGSGKLIR…AWVAFKIRKA (169 aa)).

The sequence is that of Senescence/dehydration-associated protein At3g51250 from Arabidopsis thaliana (Mouse-ear cress).